The primary structure comprises 272 residues: Soluble interferon gamma receptor OPG193 (272 aa).

A signal peptide spans 1-13 (MRYIIILAVLFIN). N-linked (GlcNAc...) asparagine; by host glycans are attached at residues Asn-42, Asn-150, and Asn-267.

It belongs to the type II cytokine receptor family. Homodimer. Interacts with host IFNG.

It is found in the secreted. In terms of biological role, counteracts the antiviral effects of host IFN-gamma. Acts as a soluble IFN-gamma receptor and thus inhibits the interaction between host IFN-gamma and its receptor. This is Soluble interferon gamma receptor OPG193 (OPG193) from Homo sapiens (Human).